The sequence spans 692 residues: Elongation factor G (692 aa).

Positions 8–282 constitute a tr-type G domain; sequence ENTRNIGIMA…AVIDYLPSPL (275 aa). Residues 17–24, 81–85, and 135–138 each bind GTP; these read AHIDAGKT, DTPGH, and NKMD.

This sequence belongs to the TRAFAC class translation factor GTPase superfamily. Classic translation factor GTPase family. EF-G/EF-2 subfamily.

It localises to the cytoplasm. Functionally, catalyzes the GTP-dependent ribosomal translocation step during translation elongation. During this step, the ribosome changes from the pre-translocational (PRE) to the post-translocational (POST) state as the newly formed A-site-bound peptidyl-tRNA and P-site-bound deacylated tRNA move to the P and E sites, respectively. Catalyzes the coordinated movement of the two tRNA molecules, the mRNA and conformational changes in the ribosome. The chain is Elongation factor G from Bacillus cereus (strain Q1).